We begin with the raw amino-acid sequence, 564 residues long: Sulfite reductase [NADPH] hemoprotein beta-component 2 (564 aa).

Cys-426, Cys-432, Cys-471, and Cys-475 together coordinate [4Fe-4S] cluster. Cys-475 contributes to the siroheme binding site.

It belongs to the nitrite and sulfite reductase 4Fe-4S domain family. In terms of assembly, alpha(8)-beta(8). The alpha component is a flavoprotein, the beta component is a hemoprotein. It depends on siroheme as a cofactor. [4Fe-4S] cluster is required as a cofactor.

The enzyme catalyses hydrogen sulfide + 3 NADP(+) + 3 H2O = sulfite + 3 NADPH + 4 H(+). The protein operates within sulfur metabolism; hydrogen sulfide biosynthesis; hydrogen sulfide from sulfite (NADPH route): step 1/1. Component of the sulfite reductase complex that catalyzes the 6-electron reduction of sulfite to sulfide. This is one of several activities required for the biosynthesis of L-cysteine from sulfate. This Klebsiella pneumoniae (strain 342) protein is Sulfite reductase [NADPH] hemoprotein beta-component 2.